Reading from the N-terminus, the 610-residue chain is Dihydroxy-acid dehydratase (610 aa).

D81 serves as a coordination point for Mg(2+). C122 is a binding site for [2Fe-2S] cluster. Mg(2+) contacts are provided by D123 and K124. The residue at position 124 (K124) is an N6-carboxylysine. C193 provides a ligand contact to [2Fe-2S] cluster. Mg(2+) is bound at residue E489. The active-site Proton acceptor is S515.

This sequence belongs to the IlvD/Edd family. Homodimer. The cofactor is [2Fe-2S] cluster. Mg(2+) serves as cofactor.

It catalyses the reaction (2R)-2,3-dihydroxy-3-methylbutanoate = 3-methyl-2-oxobutanoate + H2O. It carries out the reaction (2R,3R)-2,3-dihydroxy-3-methylpentanoate = (S)-3-methyl-2-oxopentanoate + H2O. The protein operates within amino-acid biosynthesis; L-isoleucine biosynthesis; L-isoleucine from 2-oxobutanoate: step 3/4. Its pathway is amino-acid biosynthesis; L-valine biosynthesis; L-valine from pyruvate: step 3/4. Functions in the biosynthesis of branched-chain amino acids. Catalyzes the dehydration of (2R,3R)-2,3-dihydroxy-3-methylpentanoate (2,3-dihydroxy-3-methylvalerate) into 2-oxo-3-methylpentanoate (2-oxo-3-methylvalerate) and of (2R)-2,3-dihydroxy-3-methylbutanoate (2,3-dihydroxyisovalerate) into 2-oxo-3-methylbutanoate (2-oxoisovalerate), the penultimate precursor to L-isoleucine and L-valine, respectively. The sequence is that of Dihydroxy-acid dehydratase from Xylella fastidiosa (strain 9a5c).